The primary structure comprises 338 residues: 2-methyl-6-phytyl-1,4-hydroquinone methyltransferase, chloroplastic (338 aa).

The transit peptide at Met1–Ser51 directs the protein to the chloroplast. Residues Ser52–Arg307 are Chloroplast intermembrane-facing. Positions Val114–Phe123 are SAM motif I. Residues Cys159–Pro172 form an SAM motif II region. Residues Arg200 to Pro213 form an SAM motif III region. The helical transmembrane segment at Phe308–Lys328 threads the bilayer. The Stromal portion of the chain corresponds to Asp329–Ile338.

The protein belongs to the class I-like SAM-binding methyltransferase superfamily. MPBQ/MBSQ MT family.

Its subcellular location is the plastid. It is found in the chloroplast inner membrane. The enzyme catalyses 2-methyl-6-phytyl-1,4-benzene-1,4-diol + S-adenosyl-L-methionine = 2,3-dimethyl-6-phytylbenzene-1,4-diol + S-adenosyl-L-homocysteine + H(+). The catalysed reaction is 2-methyl-6-(all-trans-nonaprenyl)benzene-1,4-diol + S-adenosyl-L-methionine = plastoquinol-9 + S-adenosyl-L-homocysteine + H(+). It catalyses the reaction 6-geranylgeranyl-2-methylbenzene-1,4-diol + S-adenosyl-L-methionine = 6-geranylgeranyl-2,3-dimethylbenzene-1,4-diol + S-adenosyl-L-homocysteine + H(+). It functions in the pathway cofactor biosynthesis; tocopherol biosynthesis. Its function is as follows. Involved in a key methylation step in both tocopherols (vitamin E) and plastoquinone synthesis. Catalyzes the conversion of 2-methyl-6-phytyl-1,4-hydroquinone (MPBQ) to 2,3-dimethyl-6-phytyl-1,4-hydroquinone (DMPQ, a substrate for tocopherol cyclase), and 2-methyl-6-solanyl-1,4-benzoquinone (MSBQ) to plastoquinone. This is 2-methyl-6-phytyl-1,4-hydroquinone methyltransferase, chloroplastic (VTE3) from Arabidopsis thaliana (Mouse-ear cress).